The sequence spans 185 residues: MKSEKEKTSKKSAVLDWAKAIIIAVVLAVLIRNFLFAPYVVDGESMEPTLHDRERIFVNMTVKYISDFKRGQIVVLNGENEHYVKRIIGLPGDTVQMKNDQLYINGKKVSEPYLAANKKKAKQDGYTLTDDFGPVKVPDDKYFVMGDNRRNSMDSRNGLGLFTKKQIAGTSKFVFFPFNEIRKTK.

Topologically, residues 1 to 20 (MKSEKEKTSKKSAVLDWAKA) are cytoplasmic. A helical transmembrane segment spans residues 21–41 (IIIAVVLAVLIRNFLFAPYVV). Topologically, residues 42–185 (DGESMEPTLH…FPFNEIRKTK (144 aa)) are extracellular. Catalysis depends on residues Ser-45 and Lys-85.

Belongs to the peptidase S26 family.

The protein resides in the cell membrane. The catalysed reaction is Cleavage of hydrophobic, N-terminal signal or leader sequences from secreted and periplasmic proteins.. This chain is Signal peptidase I (sipA), found in Bacillus amyloliquefaciens (Bacillus velezensis).